Here is a 263-residue protein sequence, read N- to C-terminus: H-2 class II histocompatibility antigen, A-K beta chain (263 aa).

Residues 1–27 (MALQIPSLLLLAAVVVLTVLSSPGTEG) form the signal peptide. Residues 28–120 (GNSERHFVHQ…TETPTSLRRL (93 aa)) are beta-1. At 28-224 (GNSERHFVHQ…RAQSESARSK (197 aa)) the chain is on the extracellular side. 2 disulfide bridges follow: Cys-42-Cys-104 and Cys-143-Cys-199. The N-linked (GlcNAc...) asparagine glycan is linked to Asn-46. The beta-2 stretch occupies residues 121–214 (EQPSVVISLS…SLKSPITVEW (94 aa)). One can recognise an Ig-like C1-type domain in the interval 123–211 (PSVVISLSRT…EHPSLKSPIT (89 aa)). Residues 215–224 (RAQSESARSK) form a connecting peptide region. The helical transmembrane segment at 225–245 (MLSGIGGCVLGVIFLGLGLFI) threads the bilayer. The Cytoplasmic portion of the chain corresponds to 246 to 263 (RHRSQKGPRGPPPAGLLQ).

This sequence belongs to the MHC class II family. Ubiquitinated in immature dendritic cells leading to down-regulation of MHC class II.

It localises to the membrane. The chain is H-2 class II histocompatibility antigen, A-K beta chain (H2-Ab1) from Mus musculus (Mouse).